The chain runs to 382 residues: Alkane 1-monooxygenase 2 (382 aa).

4 consecutive transmembrane segments (helical) span residues 17 to 37 (GYLA…FVGV), 45 to 65 (WAWF…YLVG), 88 to 108 (VSAI…GHIF), and 114 to 134 (GLLG…IIAI). Fe cation contacts are provided by histidine 138, histidine 142, histidine 168, histidine 172, and histidine 173. Residues 236–256 (ALFAATFGLLWGWQGVVFFLG) form a helical membrane-spanning segment. Fe cation contacts are provided by histidine 312, histidine 315, and histidine 316.

Belongs to the fatty acid desaturase type 1 family. AlkB subfamily. The cofactor is Fe(3+).

The protein resides in the cell inner membrane. It catalyses the reaction octane + 2 reduced [rubredoxin] + O2 + 2 H(+) = 2 oxidized [rubredoxin] + octan-1-ol + H2O. The protein operates within hydrocarbon metabolism; alkane degradation. Functionally, catalyzes the hydroxylation of n-alkanes in the presence of a NADH-rubredoxin reductase and rubredoxin. It preferably hydroxylases C8-C16 hydrocarbons. In Alcanivorax borkumensis (strain ATCC 700651 / DSM 11573 / NCIMB 13689 / SK2), this protein is Alkane 1-monooxygenase 2 (alkB2).